A 275-amino-acid polypeptide reads, in one-letter code: NH(3)-dependent NAD(+) synthetase (275 aa).

46–53 (GISGGQDS) is an ATP binding site. D52 is a Mg(2+) binding site. Deamido-NAD(+) is bound at residue R140. An ATP-binding site is contributed by T160. E165 is a binding site for Mg(2+). Deamido-NAD(+)-binding residues include K173 and D180. ATP contacts are provided by K189 and T211. 260 to 261 (HK) contacts deamido-NAD(+).

The protein belongs to the NAD synthetase family. As to quaternary structure, homodimer.

It carries out the reaction deamido-NAD(+) + NH4(+) + ATP = AMP + diphosphate + NAD(+) + H(+). Its pathway is cofactor biosynthesis; NAD(+) biosynthesis; NAD(+) from deamido-NAD(+) (ammonia route): step 1/1. In terms of biological role, catalyzes the ATP-dependent amidation of deamido-NAD to form NAD. Uses ammonia as a nitrogen source. This Shigella flexneri serotype 5b (strain 8401) protein is NH(3)-dependent NAD(+) synthetase.